We begin with the raw amino-acid sequence, 497 residues long: Taxane 10-beta-hydroxylase (497 aa).

A heme-binding site is contributed by C443.

The protein belongs to the cytochrome P450 family. The cofactor is heme.

It catalyses the reaction taxa-4(20),11-dien-5alpha-yl acetate + reduced [NADPH--hemoprotein reductase] + O2 = 10beta-hydroxytaxa-4(20),11-dien-5alpha-yl acetate + oxidized [NADPH--hemoprotein reductase] + H2O + H(+). It functions in the pathway alkaloid biosynthesis; taxol biosynthesis; 10-deacetyl-2-debenzoylbaccatin III from taxa-4(20),11-dien-5alpha-ol: step 2/3. In terms of biological role, involved in the transformation of a taxadienyl acetate by hydroxylation at C10 to yield taxadien-5-alpha-acetoxy-10-beta-ol. In Taxus cuspidata (Japanese yew), this protein is Taxane 10-beta-hydroxylase (CYP725A1).